The chain runs to 209 residues: Thymidine kinase (209 aa).

ATP is bound by residues 9 to 16 (AAMNAGKS) and 88 to 91 (DEAQ). Glu-89 acts as the Proton acceptor in catalysis. Residues Cys-146, Cys-148, Cys-183, and His-186 each contribute to the Zn(2+) site.

This sequence belongs to the thymidine kinase family. In terms of assembly, homotetramer.

It localises to the cytoplasm. It catalyses the reaction thymidine + ATP = dTMP + ADP + H(+). This Legionella pneumophila (strain Paris) protein is Thymidine kinase.